We begin with the raw amino-acid sequence, 760 residues long: Penicillin-binding protein 1B (760 aa).

Residues 1-8 (MFFNFKKY) are Cytoplasmic-facing. The chain crosses the membrane as a helical; Signal-anchor for type II membrane protein span at residues 9–29 (FLIKVFFFVLILTLCYGLYLY). At 30 to 760 (VKINRFINGK…NFLFWLKNLF (731 aa)) the chain is on the extracellular side. The tract at residues 136–308 (FRLEPKLIAM…SLYSPWTNPN (173 aa)) is transglycosylase. The active-site Proton donor; for transglycosylase activity is E174. A transpeptidase region spans residues 392–684 (EQAVKIEIPI…SSGAMQIYKR (293 aa)). Residue S451 is the Acyl-ester intermediate; for transpeptidase activity of the active site.

In the N-terminal section; belongs to the glycosyltransferase 51 family. The protein in the C-terminal section; belongs to the transpeptidase family.

It is found in the cell membrane. It carries out the reaction [GlcNAc-(1-&gt;4)-Mur2Ac(oyl-L-Ala-gamma-D-Glu-L-Lys-D-Ala-D-Ala)](n)-di-trans,octa-cis-undecaprenyl diphosphate + beta-D-GlcNAc-(1-&gt;4)-Mur2Ac(oyl-L-Ala-gamma-D-Glu-L-Lys-D-Ala-D-Ala)-di-trans,octa-cis-undecaprenyl diphosphate = [GlcNAc-(1-&gt;4)-Mur2Ac(oyl-L-Ala-gamma-D-Glu-L-Lys-D-Ala-D-Ala)](n+1)-di-trans,octa-cis-undecaprenyl diphosphate + di-trans,octa-cis-undecaprenyl diphosphate + H(+). It catalyses the reaction Preferential cleavage: (Ac)2-L-Lys-D-Ala-|-D-Ala. Also transpeptidation of peptidyl-alanyl moieties that are N-acyl substituents of D-alanine.. It functions in the pathway cell wall biogenesis; peptidoglycan biosynthesis. Cell wall formation. Synthesis of cross-linked peptidoglycan from the lipid intermediates. The enzyme has a penicillin-insensitive transglycosylase N-terminal domain (formation of linear glycan strands) and a penicillin-sensitive transpeptidase C-terminal domain (cross-linking of the peptide subunits). The polypeptide is Penicillin-binding protein 1B (mrcB) (Buchnera aphidicola subsp. Acyrthosiphon pisum (strain APS) (Acyrthosiphon pisum symbiotic bacterium)).